A 1486-amino-acid chain; its full sequence is Phosphatidylinositol 3-kinase C2 domain-containing subunit gamma (1486 aa).

The 87-residue stretch at 285–371 (KTKFNIHIFI…IQLHLQKSRE (87 aa)) folds into the PI3K-RBD domain. One can recognise a C2 PI3K-type domain in the interval 521–669 (LPSHLSFTVY…SPVTLQIDFP (149 aa)). In terms of domain architecture, PIK helical spans 684–860 (RSNLEEPLKE…QKLLAALQFC (177 aa)). One can recognise a PI3K/PI4K catalytic domain in the interval 929–1207 (DHDACSYFTS…KIKESLECFP (279 aa)). Residues 935–941 (YFTSNAL) form a G-loop region. The segment at 1071–1079 (GVCDRHNDN) is catalytic loop. The tract at residues 1090–1116 (HIDFGKFLGHAQTFGGIKRDRAPFIFT) is activation loop. Residues 1240–1352 (LSTTRSIERA…SFFLSEAVQQ (113 aa)) enclose the PX domain. The C2 domain occupies 1369-1486 (KKPKVQLVIS…KWYPLGNSII (118 aa)).

This sequence belongs to the PI3/PI4-kinase family. Highly expressed in liver, prostate and testis. Lower levels in small intestine, kidney and pancreas.

Its subcellular location is the membrane. It carries out the reaction a 1,2-diacyl-sn-glycero-3-phospho-(1D-myo-inositol 4-phosphate) + ATP = a 1,2-diacyl-sn-glycero-3-phospho-(1D-myo-inositol-3,4-bisphosphate) + ADP + H(+). The catalysed reaction is a 1,2-diacyl-sn-glycero-3-phospho-(1D-myo-inositol) + ATP = a 1,2-diacyl-sn-glycero-3-phospho-(1D-myo-inositol-3-phosphate) + ADP + H(+). In terms of biological role, generates phosphatidylinositol 3-phosphate (PtdIns3P) and phosphatidylinositol 3,4-bisphosphate (PtdIns(3,4)P2) that act as second messengers. May play a role in SDF1A-stimulated chemotaxis. This chain is Phosphatidylinositol 3-kinase C2 domain-containing subunit gamma (PIK3C2G), found in Homo sapiens (Human).